The primary structure comprises 122 residues: Acidic phospholipase A2 4 (122 aa).

Disulfide bonds link cysteine 26-cysteine 115, cysteine 28-cysteine 44, cysteine 43-cysteine 95, cysteine 49-cysteine 122, cysteine 50-cysteine 88, cysteine 57-cysteine 81, and cysteine 75-cysteine 86. Ca(2+) contacts are provided by phenylalanine 27, glycine 29, and glycine 31. The active site involves histidine 47. Aspartate 48 is a Ca(2+) binding site. The active site involves aspartate 89.

It belongs to the phospholipase A2 family. Group II subfamily. D49 sub-subfamily. Ca(2+) serves as cofactor. In terms of tissue distribution, expressed by the venom gland.

Its subcellular location is the secreted. It carries out the reaction a 1,2-diacyl-sn-glycero-3-phosphocholine + H2O = a 1-acyl-sn-glycero-3-phosphocholine + a fatty acid + H(+). Snake venom phospholipase A2 (PLA2) that has high lipolytic activity. PLA2 catalyzes the calcium-dependent hydrolysis of the 2-acyl groups in 3-sn-phosphoglycerides. The protein is Acidic phospholipase A2 4 of Craspedocephalus gramineus (Bamboo pit viper).